A 712-amino-acid chain; its full sequence is Aryl hydrocarbon receptor nuclear translocator 2 (712 aa).

The segment at 36 to 73 (AGAMPARGGKRRSGMDFDDEDGEGPSKFSRENHSEIER) is disordered. Omega-N-methylarginine is present on arginine 42. Residues 63–73 (FSRENHSEIER) show a composition bias toward basic and acidic residues. The bHLH domain maps to 63-116 (FSRENHSEIERRRRNKMTQYITELSDMVPTCSALARKPDKLTILRMAVSHMKSM). PAS domains lie at 134 to 209 (TEQE…MTGR) and 323 to 393 (PVCM…VKLK). One can recognise a PAC domain in the interval 398–441 (SVMYRFRTKNREWLLIRTSSFTFQNPYSDEIEYVICTNTNVKQL). The segment at 573–712 (AWTGSRPPFP…DLGMFPPFSE (140 aa)) is disordered. Composition is skewed to low complexity over residues 597–626 (SSHP…AYPS) and 653–675 (SQWQ…QPGQ).

Efficient DNA binding requires dimerization with another bHLH protein. Heterodimer with NPAS4 or SIM1. Heterodimer with the aryl hydrocarbon receptor (AHR) or the SIM1 protein. Interacts with TACC3. In terms of tissue distribution, restricted to adult brain and kidney.

Its subcellular location is the nucleus. In terms of biological role, transcription factor that plays a role in the development of the hypothalamo-pituitary axis, postnatal brain growth, and visual and renal function. Specifically recognizes the xenobiotic response element (XRE). In Mus musculus (Mouse), this protein is Aryl hydrocarbon receptor nuclear translocator 2 (Arnt2).